Reading from the N-terminus, the 428-residue chain is Elongation factor 1-alpha (428 aa).

The tr-type G domain occupies 5-217; the sequence is KPHVNIVFIG…DQIPEPEKPT (213 aa). The tract at residues 14–21 is G1; it reads GHVDHGKS. Residue 14–21 participates in GTP binding; the sequence is GHVDHGKS. S21 lines the Mg(2+) pocket. The interval 68–72 is G2; sequence GITID. A G3 region spans residues 89 to 92; sequence DAPG. GTP contacts are provided by residues 89 to 93 and 144 to 147; these read DAPGH and NKMD. Positions 144–147 are G4; it reads NKMD. The interval 181–183 is G5; it reads SAW.

Belongs to the TRAFAC class translation factor GTPase superfamily. Classic translation factor GTPase family. EF-Tu/EF-1A subfamily.

The protein resides in the cytoplasm. It carries out the reaction GTP + H2O = GDP + phosphate + H(+). GTP hydrolase that promotes the GTP-dependent binding of aminoacyl-tRNA to the A-site of ribosomes during protein biosynthesis. This chain is Elongation factor 1-alpha, found in Thermococcus sibiricus (strain DSM 12597 / MM 739).